A 1191-amino-acid chain; its full sequence is Major DNA-binding protein (1191 aa).

Positions 820-821 (FW) match the Required for filament formation motif. Disordered stretches follow at residues 1122–1146 (TAAG…AADE) and 1168–1191 (AGLI…RSRL). Over residues 1127–1142 (AAGGGGSATEGGGGGA) the composition is skewed to gly residues. The segment at 1173-1191 (GDDVRGDDEFELPSKRSRL) is required for nuclear localization.

Belongs to the herpesviridae major DNA-binding protein family. In terms of assembly, homooligomers. Forms double-helical filaments necessary for the formation of replication compartments within the host nucleus. Interacts with the origin-binding protein. Interacts with the helicase primase complex; this interaction stimulates primer synthesis activity of the helicase-primase complex. Interacts with the DNA polymerase. Interacts with the alkaline exonuclease; this interaction increases its nuclease processivity.

The protein resides in the host nucleus. Its function is as follows. Single-stranded DNA-binding protein required for DNA replication. In terms of biological role, plays several crucial roles in viral infection. Participates in the opening of the viral DNA origin to initiate replication by interacting with the origin-binding protein. May disrupt loops, hairpins and other secondary structures present on ssDNA to reduce and eliminate pausing of viral DNA polymerase at specific sites during elongation. Promotes viral DNA recombination by performing strand-transfer, characterized by the ability to transfer a DNA strand from a linear duplex to a complementary single-stranded DNA circle. Can also catalyze the renaturation of complementary single strands. Additionally, reorganizes the host cell nucleus, leading to the formation of prereplicative sites and replication compartments. This process is driven by the protein which can form double-helical filaments in the absence of DNA. This is Major DNA-binding protein from Mus musculus (Mouse).